Consider the following 203-residue polypeptide: MKKWLAISCLIAGVTSTAVYADAAKDLQGRLNKVNSFHANFSQKVTSTDGAAVQEGEGELWLKRPNLFNWKTTSPDESALISDGKTLWFYNPFVEQVTATWLKDATGNTPFILITRNDTSDWNKYDVRQKGDDFELTPKSASGNLKQFAINVTTNGTIKQFTATEQDGQRSTYVLRNQQNGVVDAAQFTFTPPKGVTLDDQRQ.

The signal sequence occupies residues Met1–Ala21.

Belongs to the LolA family. Monomer.

It localises to the periplasm. In terms of biological role, participates in the translocation of lipoproteins from the inner membrane to the outer membrane. Only forms a complex with a lipoprotein if the residue after the N-terminal Cys is not an aspartate (The Asp acts as a targeting signal to indicate that the lipoprotein should stay in the inner membrane). This chain is Outer-membrane lipoprotein carrier protein, found in Pectobacterium atrosepticum (strain SCRI 1043 / ATCC BAA-672) (Erwinia carotovora subsp. atroseptica).